The following is a 257-amino-acid chain: Proteasome assembly chaperone 1 (257 aa).

Belongs to the PSMG1 family. As to quaternary structure, forms a heterodimer with psmg2.

Chaperone protein which promotes assembly of the 20S proteasome as part of a heterodimer with psmg2. The polypeptide is Proteasome assembly chaperone 1 (psmg1) (Nematostella vectensis (Starlet sea anemone)).